The chain runs to 717 residues: Catalase-peroxidase (717 aa).

The signal sequence occupies residues 1–12 (MTSKGMCPVAHG). The segment at residues 93-221 (WHSAGSYRIA…LAAVMMGLIY (129 aa)) is a cross-link (tryptophyl-tyrosyl-methioninium (Trp-Tyr) (with M-247)). Residue His-94 is the Proton acceptor of the active site. Positions 221–247 (YVNPEGVDGKPDPLKTAQDMRVTFARM) form a cross-link, tryptophyl-tyrosyl-methioninium (Tyr-Met) (with W-93). Residue His-262 coordinates heme b.

This sequence belongs to the peroxidase family. Peroxidase/catalase subfamily. In terms of assembly, homodimer or homotetramer. Requires heme b as cofactor. In terms of processing, formation of the three residue Trp-Tyr-Met cross-link is important for the catalase, but not the peroxidase activity of the enzyme.

It carries out the reaction H2O2 + AH2 = A + 2 H2O. The catalysed reaction is 2 H2O2 = O2 + 2 H2O. Bifunctional enzyme with both catalase and broad-spectrum peroxidase activity. The protein is Catalase-peroxidase of Polynucleobacter asymbioticus (strain DSM 18221 / CIP 109841 / QLW-P1DMWA-1) (Polynucleobacter necessarius subsp. asymbioticus).